The primary structure comprises 201 residues: Type III effector protein HopBF1 (201 aa).

ATP-binding residues include S39, Q40, K41, D106, I108, and D113. D154 is a catalytic residue. Q156 is a binding site for ATP.

It belongs to the HopBF1 family.

It localises to the secreted. Its subcellular location is the host cell. It catalyses the reaction L-seryl-[protein] + ATP = O-phospho-L-seryl-[protein] + ADP + H(+). Functionally, effector protein that targets and inactivates the plant molecular chaperone HSP90 during infection. HopBF1 is recognized by HSP90 as a host client. As a result, HopBF1 phosphorylates HSP90, leading to the inactivation of the HSP90 ATPase activity and chaperone function. Phosphorylation of HSP90 prevents activation of immune receptors that trigger the hypersensitive response in plants. HopBF1 is sufficient to cause severe disease symptoms in plants infected with P.syringae. In vitro, can phosphorylate the recombinant yeast HSP82 (HSP90) on Ser-99, Triticum aestivum (wheat) HSP90 and human HSP 90-beta, but not the prokaryotic HSP90 orthologs, HtpG from E.coli and P.syringae. Does not act on generic protein kinase substrates such as casein and myelin basic protein, as well as the yeast HSP70s and Bip chaperones. This chain is Type III effector protein HopBF1, found in Pseudomonas syringae pv. syringae (strain FF5).